Here is a 445-residue protein sequence, read N- to C-terminus: MSKPIHIIGGGLAGTEAAWQLARRGLACTLHEMRPVRPTPAHQTDRLAELVCSNSLKSESESTAPWLLKEELRRLDSLLLQCAQKARVPGGHALTVDRDIFAREVTAAITAEPLITLLRDEVSSLSADAIWIVASGPLTSGPLAEEIARLTGSGRLYFYDSISPIVDAESVDTSIAWWASRYGKSTDGTDDYLNCPLDRGQYEHFVDELLKADSVSAHIPEDNTCYFEACLPIEEIARRGRDTLRFGPMKPMGLDDPRTGRRPWAVVQLRQENLRAESFNLVGFQNHMKFPEQKRVLRLIPGLQNAEFLRYGQIHRNTYINAPALLTAALNLRARPEIFFAGQISGVEGYVESIATGLMAGIHAAALATGDTPRPLPRQTALGSLCHYVSGADPKDYQPANITFDLLPQLEEAERQRLRRDKKARHALVCQRALEALEEYRHAIV.

9-14 (GGGLAG) provides a ligand contact to FAD.

It belongs to the MnmG family. TrmFO subfamily. The cofactor is FAD.

Its subcellular location is the cytoplasm. It carries out the reaction uridine(54) in tRNA + (6R)-5,10-methylene-5,6,7,8-tetrahydrofolate + NADH + H(+) = 5-methyluridine(54) in tRNA + (6S)-5,6,7,8-tetrahydrofolate + NAD(+). It catalyses the reaction uridine(54) in tRNA + (6R)-5,10-methylene-5,6,7,8-tetrahydrofolate + NADPH + H(+) = 5-methyluridine(54) in tRNA + (6S)-5,6,7,8-tetrahydrofolate + NADP(+). Its function is as follows. Catalyzes the folate-dependent formation of 5-methyl-uridine at position 54 (M-5-U54) in all tRNAs. This chain is Methylenetetrahydrofolate--tRNA-(uracil-5-)-methyltransferase TrmFO, found in Solibacter usitatus (strain Ellin6076).